Consider the following 488-residue polypeptide: Glutamyl-tRNA(Gln) amidotransferase subunit A (488 aa).

Catalysis depends on charge relay system residues Lys77 and Ser152. The Acyl-ester intermediate role is filled by Ser176.

It belongs to the amidase family. GatA subfamily. In terms of assembly, heterotrimer of A, B and C subunits.

The enzyme catalyses L-glutamyl-tRNA(Gln) + L-glutamine + ATP + H2O = L-glutaminyl-tRNA(Gln) + L-glutamate + ADP + phosphate + H(+). Its function is as follows. Allows the formation of correctly charged Gln-tRNA(Gln) through the transamidation of misacylated Glu-tRNA(Gln) in organisms which lack glutaminyl-tRNA synthetase. The reaction takes place in the presence of glutamine and ATP through an activated gamma-phospho-Glu-tRNA(Gln). This Streptococcus pyogenes serotype M4 (strain MGAS10750) protein is Glutamyl-tRNA(Gln) amidotransferase subunit A.